We begin with the raw amino-acid sequence, 196 residues long: ATP-dependent Clp protease proteolytic subunit (196 aa).

S96 functions as the Nucleophile in the catalytic mechanism. Residue H121 is part of the active site.

This sequence belongs to the peptidase S14 family. As to quaternary structure, fourteen ClpP subunits assemble into 2 heptameric rings which stack back to back to give a disk-like structure with a central cavity, resembling the structure of eukaryotic proteasomes.

It localises to the cytoplasm. It carries out the reaction Hydrolysis of proteins to small peptides in the presence of ATP and magnesium. alpha-casein is the usual test substrate. In the absence of ATP, only oligopeptides shorter than five residues are hydrolyzed (such as succinyl-Leu-Tyr-|-NHMec, and Leu-Tyr-Leu-|-Tyr-Trp, in which cleavage of the -Tyr-|-Leu- and -Tyr-|-Trp bonds also occurs).. Its function is as follows. Cleaves peptides in various proteins in a process that requires ATP hydrolysis. Has a chymotrypsin-like activity. Plays a major role in the degradation of misfolded proteins. This Streptococcus equi subsp. zooepidemicus (strain H70) protein is ATP-dependent Clp protease proteolytic subunit.